Reading from the N-terminus, the 2324-residue chain is MDGQTRYLDELVGALRAERAQGRAGGYAGEFPPREGGGRARRVARTVVAKLADAEVADAAFWRACEALDLVFTGRPMVLAEALDEEAGVLWAVRSCWRVAAVHFGRRERGWALRRASSRWVRLCADLYGQRWRARVGAELDRELCAGEAAVRAVLGGGQEAGEHMRALRALCVAAEWAVSREFWFVTGGAERVGLRLQRLARLARYIGDAVELPLAEYEEVQVRLLGVSVQAYLEPDRPGLGELRFALEQLQYFVRGKHLRREFAAWSRLLLRLYVRCRSDRAALLLVREVLVLDAAELPEAATDAQRSLQLVRYDLERQFAADHALRWDPALRAKLLAAGTPPVILEPFTSNRQLEKLRLRVLCDFQVGDSALLVHQFSAAGVPLGADPVALYTHLDEGIARAFGRQDTEAQVRYLSLVRKLACLESRKPSPGFDCDLCDHTNLWLPRESIDPSRPEAASDSLAFKLLVGYYLREQLESSGEALVIGILITLRSIFTHFQPPKLVENHYGDMVDEHGCIQLFRMAFMSLNRHVRILSVLLIPYWNLSRSYNADEQQTALIIKFLQRNPDPHITETYLMAWTQLTLSTSGELFDSLLLKLIDIFNSSNFVEHVVMASQLKFIARVLNKTAYQLLSPILPILLKQIGKNLGEKKLSLERLLNLLEYSAKTVIENFQRYIVPYALTQYKGDALTEIAKIMCQNNEPSMVSEQKKRLLDRNSRQIFAVALVKHGLFSLETIETLFINNDPTFDRSYVAGFLPDYKTLAEVLKLFKPVEKVDSPMNDNERAVLSSLRFLFLTNFSVDKHRGSKFKNVTEWTQEKEAVFQKKLKDNILGIFQVFSSDMHDIEGKTTYFEKLRVISGISFLIKYASKECIISALAQVSICLQTGLEIPEMRYNTLRCWLHLVKYLSEEELSTVIDVLICFILQKWDEFSGKIQQAAIDILDALILEKQTLLTNSRPYIVLAFLNKSELHIFENHGFFARTASKLLKNTNWVSVFVSNLKSHNIYVIKQTLQDIRLFLEKKQDAGIDIKLISKDGKNISELLGALLDTSHKYRNSDLIICETCALCISMIGVLDVTKHELQRCNVYDNDICDFNNPTQTTKFLINIINERLVPSFWQSENPTKQLFVALVIQESLKYCGLSASSWDVTKPDLYPNESKLWNRFNDISKTTLYPLLSSLYLAQSWKEYVPLSYPSFKVKDGYSTWIKNLSLDLLKTATESSHPLHVFSSLIREDDGTLSDYLLPYIIMDIIIKAESGTKYFDYLQNVIKDFEYIFNYTLYDLNHYQIDGLKMCYDSIFRVFEYCKKWVNQFRQNYSKQHGTFTIREEKYTRMLNRAGKFADIIPSHVLAQKSLETNSFERSALYLEQSYREKSSNGLQDDKLLPYLQTTYAEINDIDAVVGVLKVFCSNNLTSRIEELQYSDNWKMAQDCFDALGDSLLNEQGGVENSVPTSRMLKLMYDHQLYDQTLKKLELNIPSKKRQLPLNLDEFYNMGIETASLSGNITELKIWIRRIEQLETLTDPSILLHYNLAKSLLAVLEGKTDMIETHSKYCYRLIGSHFTTPSHSTTLLKRRNLFIKLHGIRDNSILSKCSTDIQFNRSVRNLAVRFKNVGSDFEPNFYLLSMRKSHNLMRSEEFVKQDLADTYFKMAQLARENDRLDIASDCLMHALKLEHTEAELEYAEILWKQGEKELALKTVAEIHQKRKGIKTLKDRDRAKVLLKYTEWLDLSNNATSVQISHQYKEVIGLDKDWDEPYYSFGLYYSRLLEKKRADGFVTTGSLEYKAITYFLSAFEKNTVKVREALPKVITFWLDTASRSVESGSSEGEYHFKRYTKEICKCIDVAIQNCPTHIWYTVLTQLLSRLLHKHTDSATLIMNILLKLTLEYPSIMLWYITVLLNSQENKRVHAGKQIMDAIKKRMPDKSSLISSAISLVQAMTRVCIKDVKNMSSRSGKSLQNDFKFDINLAPSEMVVPVNINLANLSPSYADTSGKHGSSKRVTINCFTPHYKVYSSLKKPKKINIIGSDGELYGIMCKKEDVRQDNQYMQFANMMVFLLGKDSESRRRSLNITTYAILSLREDCGLIEIVPNVDTIRSILMAKYDSMKIKYTLSVLYEKWKSVSEEQRLGFYKSCTDTFPPVLYQWFLETFPNPIRWYNARNAFVRSYAVMAMVGHILGLGDRHLENILLDLQTGKVLHVDFDCLFEKGKTLPVPEIVPFRLTQNIQDAFGVTGTEGTFKKSSEVTVRVMRNNELALVNIIETIMYDRNMDHSIQNALRVLRNKVRGIDPRDDLPLSVPGQVDTVVQQASSDENLAQMYIGWLPFW.

The region spanning 1349–1901 (VLAQKSLETN…LWYITVLLNS (553 aa)) is the FAT domain. The PI3K/PI4K catalytic domain occupies 2005–2308 (FTPHYKVYSS…QVDTVVQQAS (304 aa)). The interval 2011–2017 (VYSSLKK) is G-loop. The segment at 2177–2185 (GLGDRHLEN) is catalytic loop. An activation loop region spans residues 2197-2221 (HVDFDCLFEKGKTLPVPEIVPFRLT). Residues 2292-2324 (LPLSVPGQVDTVVQQASSDENLAQMYIGWLPFW) enclose the FATC domain.

Belongs to the PI3/PI4-kinase family. ATM subfamily.

Its subcellular location is the nucleus. The enzyme catalyses L-seryl-[protein] + ATP = O-phospho-L-seryl-[protein] + ADP + H(+). The catalysed reaction is L-threonyl-[protein] + ATP = O-phospho-L-threonyl-[protein] + ADP + H(+). In terms of biological role, serine/threonine protein kinase which activates checkpoint signaling upon genotoxic stresses such as ionizing radiation (IR), ultraviolet light (UV), or DNA replication stalling, thereby acting as a DNA damage sensor. Recognizes the substrate consensus sequence [ST]-Q. Recruited to DNA lesions in order to initiate the DNA repair by homologous recombination. Phosphorylates histone H2A to form H2AS128ph (gamma-H2A) at sites of DNA damage, also involved in the regulation of DNA damage response mechanism. Required for cell growth and meiotic recombination. This chain is Serine/threonine-protein kinase MEC1 (MEC1), found in Eremothecium gossypii (strain ATCC 10895 / CBS 109.51 / FGSC 9923 / NRRL Y-1056) (Yeast).